Reading from the N-terminus, the 1175-residue chain is Phospholipid-transporting ATPase IF (1175 aa).

4 consecutive transmembrane segments (helical) span residues 69 to 89 (FYFL…SPIT), 91 to 111 (GLPL…EDWL), 287 to 307 (NTFL…STIL), and 338 to 358 (FISD…ISLY). The 4-aspartylphosphate intermediate role is filled by Asp-407. Residues Asp-407, Lys-408, Thr-409, Glu-530, Phe-571, Lys-594, Arg-625, Thr-705, Gly-706, Asp-707, Arg-793, and Lys-799 each contribute to the ATP site. Position 407 (Asp-407) interacts with Mg(2+). Residue Thr-409 participates in Mg(2+) binding. Asp-820 provides a ligand contact to Mg(2+). 2 residues coordinate ATP: Asn-823 and Asp-824. Mg(2+) is bound at residue Asp-824. A run of 6 helical transmembrane segments spans residues 862–882 (LLFV…QYFF), 910–930 (VYLT…YSLV), 963–983 (WTVL…FLVG), 994–1014 (MFGN…TVTV), 1033–1053 (GSII…WPFL), and 1060–1080 (FVFI…LMVV).

This sequence belongs to the cation transport ATPase (P-type) (TC 3.A.3) family. Type IV subfamily. As to quaternary structure, component of a P4-ATPase flippase complex which consists of a catalytic alpha subunit ATP11B and an accessory beta subunit TMEM30A. It depends on Mg(2+) as a cofactor. As to expression, expressed in retina, brain, liver, testes and kidney (at protein level).

Its subcellular location is the recycling endosome membrane. The protein resides in the early endosome. The protein localises to the endoplasmic reticulum. It is found in the golgi apparatus. It localises to the trans-Golgi network. It carries out the reaction ATP + H2O + phospholipidSide 1 = ADP + phosphate + phospholipidSide 2.. The enzyme catalyses a 1,2-diacyl-sn-glycero-3-phospho-L-serine(out) + ATP + H2O = a 1,2-diacyl-sn-glycero-3-phospho-L-serine(in) + ADP + phosphate + H(+). The catalysed reaction is a 1,2-diacyl-sn-glycero-3-phosphoethanolamine(out) + ATP + H2O = a 1,2-diacyl-sn-glycero-3-phosphoethanolamine(in) + ADP + phosphate + H(+). In terms of biological role, catalytic component of a P4-ATPase flippase complex which catalyzes the hydrolysis of ATP coupled to the transport of aminophospholipids, phosphatidylserines (PS) and phosphatidylethanolamines (PE), from the outer to the inner leaflet of intracellular membranes. May contribute to the maintenance of membrane lipid asymmetry in endosome compartment. This chain is Phospholipid-transporting ATPase IF, found in Mus musculus (Mouse).